We begin with the raw amino-acid sequence, 512 residues long: Probable capsid protein 4 (512 aa).

The protein belongs to the NCLDV major capsid protein family.

It localises to the virion. This Acanthamoeba polyphaga mimivirus (APMV) protein is Probable capsid protein 4.